A 434-amino-acid chain; its full sequence is Histidinol dehydrogenase (434 aa).

Residues tyrosine 130, glutamine 188, and asparagine 211 each contribute to the NAD(+) site. The substrate site is built by serine 237, glutamine 259, and histidine 262. Residues glutamine 259 and histidine 262 each contribute to the Zn(2+) site. Active-site proton acceptor residues include glutamate 326 and histidine 327. Positions 327, 360, 414, and 419 each coordinate substrate. Aspartate 360 provides a ligand contact to Zn(2+). Position 419 (histidine 419) interacts with Zn(2+).

This sequence belongs to the histidinol dehydrogenase family. As to quaternary structure, homodimer. It depends on Zn(2+) as a cofactor.

It catalyses the reaction L-histidinol + 2 NAD(+) + H2O = L-histidine + 2 NADH + 3 H(+). The protein operates within amino-acid biosynthesis; L-histidine biosynthesis; L-histidine from 5-phospho-alpha-D-ribose 1-diphosphate: step 9/9. Its function is as follows. Catalyzes the sequential NAD-dependent oxidations of L-histidinol to L-histidinaldehyde and then to L-histidine. The polypeptide is Histidinol dehydrogenase (Shigella dysenteriae serotype 1 (strain Sd197)).